The following is a 545-amino-acid chain: CTP synthase (545 aa).

The tract at residues 1 to 267 is amidoligase domain; that stretch reads MTKFIFVTGG…AEQVLNLLQM (267 aa). Serine 13 lines the CTP pocket. Serine 13 is a binding site for UTP. Residues 14–19 and aspartate 71 contribute to the ATP site; that span reads SIGKGI. Mg(2+) is bound by residues aspartate 71 and glutamate 141. CTP-binding positions include 148–150, 188–193, and lysine 224; these read DIE and KTKPTQ. Residues 188 to 193 and lysine 224 contribute to the UTP site; that span reads KTKPTQ. In terms of domain architecture, Glutamine amidotransferase type-1 spans 292 to 534; the sequence is EIAIVGKYVQ…IQAAIALSLS (243 aa). Residue glycine 354 coordinates L-glutamine. Cysteine 381 (nucleophile; for glutamine hydrolysis) is an active-site residue. Residues 382 to 385, glutamate 405, and arginine 462 each bind L-glutamine; that span reads LGMQ. Catalysis depends on residues histidine 507 and glutamate 509.

This sequence belongs to the CTP synthase family. Homotetramer.

It catalyses the reaction UTP + L-glutamine + ATP + H2O = CTP + L-glutamate + ADP + phosphate + 2 H(+). The enzyme catalyses L-glutamine + H2O = L-glutamate + NH4(+). It carries out the reaction UTP + NH4(+) + ATP = CTP + ADP + phosphate + 2 H(+). The protein operates within pyrimidine metabolism; CTP biosynthesis via de novo pathway; CTP from UDP: step 2/2. Allosterically activated by GTP, when glutamine is the substrate; GTP has no effect on the reaction when ammonia is the substrate. The allosteric effector GTP functions by stabilizing the protein conformation that binds the tetrahedral intermediate(s) formed during glutamine hydrolysis. Inhibited by the product CTP, via allosteric rather than competitive inhibition. Functionally, catalyzes the ATP-dependent amination of UTP to CTP with either L-glutamine or ammonia as the source of nitrogen. Regulates intracellular CTP levels through interactions with the four ribonucleotide triphosphates. This Nostoc punctiforme (strain ATCC 29133 / PCC 73102) protein is CTP synthase.